Consider the following 432-residue polypeptide: Peptidase B (432 aa).

The Mn(2+) site is built by lysine 196 and aspartate 201. The active site involves lysine 208. Mn(2+) contacts are provided by aspartate 219, aspartate 278, and glutamate 280. Residue arginine 282 is part of the active site.

It belongs to the peptidase M17 family. As to quaternary structure, homohexamer. Mn(2+) serves as cofactor.

Its subcellular location is the cytoplasm. The catalysed reaction is Release of an N-terminal amino acid, Xaa, from a peptide or arylamide. Xaa is preferably Glu or Asp but may be other amino acids, including Leu, Met, His, Cys and Gln.. Probably plays an important role in intracellular peptide degradation. The protein is Peptidase B of Yersinia pseudotuberculosis serotype IB (strain PB1/+).